The sequence spans 291 residues: Small ribosomal subunit protein uS2 (291 aa).

The segment at 254–291 is disordered; it reads RTSNRDNKNNKNNNNTDNTDNAASIKEEDLIGGSNNEN. A compositionally biased stretch (low complexity) spans 263 to 277; sequence NKNNNNTDNTDNAAS.

The protein belongs to the universal ribosomal protein uS2 family.

The protein is Small ribosomal subunit protein uS2 of Ehrlichia canis (strain Jake).